The following is a 396-amino-acid chain: Elongation factor Tu (396 aa).

In terms of domain architecture, tr-type G spans 11–205; that stretch reads KPHVNIGTIG…VIDEYIPTPV (195 aa). Positions 20–27 are G1; that stretch reads GHVDHGKT. 20–27 is a GTP binding site; sequence GHVDHGKT. Residue Thr-27 coordinates Mg(2+). Positions 61-65 are G2; that stretch reads GITIN. Residues 82 to 85 are G3; that stretch reads DAPG. GTP contacts are provided by residues 82–86 and 137–140; these read DAPGH and NKTD. The segment at 137–140 is G4; it reads NKTD. The tract at residues 175 to 177 is G5; sequence SAL.

The protein belongs to the TRAFAC class translation factor GTPase superfamily. Classic translation factor GTPase family. EF-Tu/EF-1A subfamily. As to quaternary structure, monomer.

It localises to the cytoplasm. The catalysed reaction is GTP + H2O = GDP + phosphate + H(+). Functionally, GTP hydrolase that promotes the GTP-dependent binding of aminoacyl-tRNA to the A-site of ribosomes during protein biosynthesis. The protein is Elongation factor Tu of Oenococcus oeni (strain ATCC BAA-331 / PSU-1).